Consider the following 268-residue polypeptide: tRNA pseudouridine synthase A (268 aa).

The active-site Nucleophile is the D52. Y110 is a binding site for substrate.

This sequence belongs to the tRNA pseudouridine synthase TruA family. In terms of assembly, homodimer.

It catalyses the reaction uridine(38/39/40) in tRNA = pseudouridine(38/39/40) in tRNA. Functionally, formation of pseudouridine at positions 38, 39 and 40 in the anticodon stem and loop of transfer RNAs. This Prochlorococcus marinus subsp. pastoris (strain CCMP1986 / NIES-2087 / MED4) protein is tRNA pseudouridine synthase A.